The primary structure comprises 274 residues: Thiamine kinase (274 aa).

Belongs to the thiamine kinase family.

The catalysed reaction is thiamine + ATP = thiamine phosphate + ADP + H(+). The protein operates within cofactor biosynthesis; thiamine diphosphate biosynthesis; thiamine phosphate from thiamine: step 1/1. In terms of biological role, catalyzes the ATP-dependent phosphorylation of thiamine to thiamine phosphate. Is involved in thiamine salvage. This Salmonella dublin (strain CT_02021853) protein is Thiamine kinase.